The chain runs to 333 residues: Lipoyl synthase (333 aa).

Polar residues predominate over residues 1–15 (MSTLVESPVPSNDSQ). The segment at 1-34 (MSTLVESPVPSNDSQAAAPAAYDPTQKQKSQAKT) is disordered. [4Fe-4S] cluster contacts are provided by Cys80, Cys85, Cys91, Cys106, Cys110, Cys113, and Ser320. The 219-residue stretch at 91–309 (CFGKGTATFM…EREAYAMGFT (219 aa)) folds into the Radical SAM core domain.

Belongs to the radical SAM superfamily. Lipoyl synthase family. [4Fe-4S] cluster serves as cofactor.

It is found in the cytoplasm. It carries out the reaction [[Fe-S] cluster scaffold protein carrying a second [4Fe-4S](2+) cluster] + N(6)-octanoyl-L-lysyl-[protein] + 2 oxidized [2Fe-2S]-[ferredoxin] + 2 S-adenosyl-L-methionine + 4 H(+) = [[Fe-S] cluster scaffold protein] + N(6)-[(R)-dihydrolipoyl]-L-lysyl-[protein] + 4 Fe(3+) + 2 hydrogen sulfide + 2 5'-deoxyadenosine + 2 L-methionine + 2 reduced [2Fe-2S]-[ferredoxin]. It functions in the pathway protein modification; protein lipoylation via endogenous pathway; protein N(6)-(lipoyl)lysine from octanoyl-[acyl-carrier-protein]: step 2/2. Its function is as follows. Catalyzes the radical-mediated insertion of two sulfur atoms into the C-6 and C-8 positions of the octanoyl moiety bound to the lipoyl domains of lipoate-dependent enzymes, thereby converting the octanoylated domains into lipoylated derivatives. In Bordetella bronchiseptica (strain ATCC BAA-588 / NCTC 13252 / RB50) (Alcaligenes bronchisepticus), this protein is Lipoyl synthase.